Reading from the N-terminus, the 98-residue chain is Small ribosomal subunit protein bS6 (98 aa).

The protein belongs to the bacterial ribosomal protein bS6 family.

Its function is as follows. Binds together with bS18 to 16S ribosomal RNA. The polypeptide is Small ribosomal subunit protein bS6 (Staphylococcus epidermidis (strain ATCC 35984 / DSM 28319 / BCRC 17069 / CCUG 31568 / BM 3577 / RP62A)).